Consider the following 294-residue polypeptide: Phosphatidylglycerol--prolipoprotein diacylglyceryl transferase (294 aa).

A run of 7 helical transmembrane segments spans residues 21-41, 60-80, 96-116, 124-144, 199-219, 226-246, and 259-279; these read VSLH…LWLA, LLYV…VLFY, WDGG…MIWF, FFQV…LGRI, SQLY…NIFV, GSVS…VEFF, and ISMG…FMVW. A 1,2-diacyl-sn-glycero-3-phospho-(1'-sn-glycerol) is bound at residue arginine 143.

The protein belongs to the Lgt family.

It is found in the cell inner membrane. The enzyme catalyses L-cysteinyl-[prolipoprotein] + a 1,2-diacyl-sn-glycero-3-phospho-(1'-sn-glycerol) = an S-1,2-diacyl-sn-glyceryl-L-cysteinyl-[prolipoprotein] + sn-glycerol 1-phosphate + H(+). It participates in protein modification; lipoprotein biosynthesis (diacylglyceryl transfer). In terms of biological role, catalyzes the transfer of the diacylglyceryl group from phosphatidylglycerol to the sulfhydryl group of the N-terminal cysteine of a prolipoprotein, the first step in the formation of mature lipoproteins. In Proteus mirabilis (strain HI4320), this protein is Phosphatidylglycerol--prolipoprotein diacylglyceryl transferase.